Here is a 358-residue protein sequence, read N- to C-terminus: Phenylalanine--tRNA ligase alpha subunit (358 aa).

Glutamate 262 is a Mg(2+) binding site.

This sequence belongs to the class-II aminoacyl-tRNA synthetase family. Phe-tRNA synthetase alpha subunit type 1 subfamily. In terms of assembly, tetramer of two alpha and two beta subunits. Mg(2+) is required as a cofactor.

Its subcellular location is the cytoplasm. The enzyme catalyses tRNA(Phe) + L-phenylalanine + ATP = L-phenylalanyl-tRNA(Phe) + AMP + diphosphate + H(+). This chain is Phenylalanine--tRNA ligase alpha subunit (pheS), found in Streptomyces coelicolor (strain ATCC BAA-471 / A3(2) / M145).